A 938-amino-acid polypeptide reads, in one-letter code: Bifunctional glutamine synthetase adenylyltransferase/adenylyl-removing enzyme (938 aa).

The tract at residues 1-457 (MLEADAARLK…HFDHVFGDPS (457 aa)) is adenylyl removase. The tract at residues 460–938 (AHTLDSMWAA…ALWTIVFGSA (479 aa)) is adenylyl transferase.

This sequence belongs to the GlnE family. Mg(2+) serves as cofactor.

The enzyme catalyses [glutamine synthetase]-O(4)-(5'-adenylyl)-L-tyrosine + phosphate = [glutamine synthetase]-L-tyrosine + ADP. It carries out the reaction [glutamine synthetase]-L-tyrosine + ATP = [glutamine synthetase]-O(4)-(5'-adenylyl)-L-tyrosine + diphosphate. Functionally, involved in the regulation of glutamine synthetase GlnA, a key enzyme in the process to assimilate ammonia. When cellular nitrogen levels are high, the C-terminal adenylyl transferase (AT) inactivates GlnA by covalent transfer of an adenylyl group from ATP to specific tyrosine residue of GlnA, thus reducing its activity. Conversely, when nitrogen levels are low, the N-terminal adenylyl removase (AR) activates GlnA by removing the adenylyl group by phosphorolysis, increasing its activity. The regulatory region of GlnE binds the signal transduction protein PII (GlnB) which indicates the nitrogen status of the cell. The chain is Bifunctional glutamine synthetase adenylyltransferase/adenylyl-removing enzyme from Aromatoleum aromaticum (strain DSM 19018 / LMG 30748 / EbN1) (Azoarcus sp. (strain EbN1)).